A 585-amino-acid chain; its full sequence is MDEEENSEINSVQARDEDVQLEDQQSQGLQDRQVDVIEQAWNNAMPDEPSPPAEDAFQDPLATDGEGGDALEAMVENVLQDDTASEGSHPSSDMSLESPGSEDDSDLESLPHWMIPQNRLRSAVDMMVSQARNRDGGIAALLSGDNFLQRVRSMVFSQERRRSRTSEETSQEAAEQPVDPPPQQPPRPPIDIGFDTNLPAEHSYFGNHLSRVPGVDYLEVGSVHHMLIFLHQHILFPGEVLPFMIDGRMFDEDMPGLDGLIFGVSFPRLQPPEDNPHKLYGVTCQIYERGESGRGLVFYKSRALQRIVINCDDIKGSPQYIARNPTSKCFSKVKILPEYFLPEPLQTVDMGSMARFRDIPSMRDKYRRFQLSTTTWPSDACQEYSFSSIVERARQRLESQKIDTMPKCPIQLSFWLVRNLHLTEKMMRLTFLTDSVNTRLQLIKSTFKDETLFFCRYCNSSLALCSDLFAMSKHGVQTQYCNPEGYIHETNTVYRVISHAIGYSGEPSTKFSWFPGYQWHIILCKFCAQHVGWEFKAVHPNLTPKVFFGLAGSSVRIGKASEYSPFNGTTYVVRNMMRMISSDME.

Disordered regions lie at residues 1–109 and 156–195; these read MDEE…DLES and FSQERRRSRTSEETSQEAAEQPVDPPPQQPPRPPIDIGFD. A compositionally biased stretch (polar residues) spans 80 to 95; sequence QDDTASEGSHPSSDMS. Over residues 158–167 the composition is skewed to basic and acidic residues; that stretch reads QERRRSRTSE. A compositionally biased stretch (pro residues) spans 178-189; sequence VDPPPQQPPRPP. One can recognise a Lon N-terminal domain in the interval 225–451; sequence HMLIFLHQHI…LIKSTFKDET (227 aa). One can recognise a CULT domain in the interval 450-559; sequence ETLFFCRYCN…LAGSSVRIGK (110 aa). The Zn(2+) site is built by C455, C458, C524, and C527.

Belongs to the CRBN family. As to quaternary structure, likely a component of a DCX (DDB1-CUL4-X-box) protein ligase complex. May interact with pic/DDB1. In terms of processing, ubiquitinated. In terms of tissue distribution, expressed in the fat body (at protein level).

It localises to the nucleus. It participates in protein modification; protein ubiquitination. Its function is as follows. Substrate recognition component of a DCX (DDB1-CUL4-X-box) E3 protein ligase complex that mediates the ubiquitination and subsequent proteasomal degradation of target proteins. Has an essential role in mediating growth by negatively regulating insulin signaling. It also has a role in maintaining presynaptic function in the neuromuscular junction synapses of third-instar larvae. In Drosophila melanogaster (Fruit fly), this protein is Protein cereblon.